We begin with the raw amino-acid sequence, 705 residues long: Phosphoribosylformylglycinamidine synthase subunit PurL (705 aa).

H32 is an active-site residue. An ATP-binding site is contributed by Y35. E76 lines the Mg(2+) pocket. Substrate contacts are provided by residues 77–80 (SHNH) and R99. Residue H78 is the Proton acceptor of the active site. A Mg(2+)-binding site is contributed by D100. A substrate-binding site is contributed by Q224. D252 provides a ligand contact to Mg(2+). 296–298 (ESQ) provides a ligand contact to substrate. Positions 471 and 508 each coordinate ATP. N509 is a Mg(2+) binding site. S511 lines the substrate pocket.

It belongs to the FGAMS family. Monomer. Part of the FGAM synthase complex composed of 1 PurL, 1 PurQ and 2 PurS subunits.

Its subcellular location is the cytoplasm. The enzyme catalyses N(2)-formyl-N(1)-(5-phospho-beta-D-ribosyl)glycinamide + L-glutamine + ATP + H2O = 2-formamido-N(1)-(5-O-phospho-beta-D-ribosyl)acetamidine + L-glutamate + ADP + phosphate + H(+). The protein operates within purine metabolism; IMP biosynthesis via de novo pathway; 5-amino-1-(5-phospho-D-ribosyl)imidazole from N(2)-formyl-N(1)-(5-phospho-D-ribosyl)glycinamide: step 1/2. Part of the phosphoribosylformylglycinamidine synthase complex involved in the purines biosynthetic pathway. Catalyzes the ATP-dependent conversion of formylglycinamide ribonucleotide (FGAR) and glutamine to yield formylglycinamidine ribonucleotide (FGAM) and glutamate. The FGAM synthase complex is composed of three subunits. PurQ produces an ammonia molecule by converting glutamine to glutamate. PurL transfers the ammonia molecule to FGAR to form FGAM in an ATP-dependent manner. PurS interacts with PurQ and PurL and is thought to assist in the transfer of the ammonia molecule from PurQ to PurL. In Pyrococcus abyssi (strain GE5 / Orsay), this protein is Phosphoribosylformylglycinamidine synthase subunit PurL.